The sequence spans 319 residues: HTH-type transcriptional regulator YidZ (319 aa).

The 58-residue stretch at 8-65 (LDLNLLLCLQLLMQERSVTKAAKRMNVTPSAVSKSLSKLRTWFDDPLFVNTPLGLTPT) folds into the HTH lysR-type domain. The segment at residues 25-44 (VTKAAKRMNVTPSAVSKSLS) is a DNA-binding region (H-T-H motif).

Belongs to the LysR transcriptional regulatory family.

Its function is as follows. Involved in anaerobic NO protection. In Citrobacter koseri (strain ATCC BAA-895 / CDC 4225-83 / SGSC4696), this protein is HTH-type transcriptional regulator YidZ.